The chain runs to 376 residues: Formate dehydrogenase 2 (376 aa).

2 residues coordinate substrate: V97 and N121. NAD(+) contacts are provided by residues 176 to 177, D197, 244 to 248, T270, D296, and 325 to 328; these read RI, PLHKD, and HISG.

The protein belongs to the D-isomer specific 2-hydroxyacid dehydrogenase family. FDH subfamily. Homodimer.

The protein resides in the cytoplasm. The enzyme catalyses formate + NAD(+) = CO2 + NADH. In terms of biological role, catalyzes the NAD(+)-dependent oxidation of formate to carbon dioxide. Formate oxidation is the final step in the methanol oxidation pathway in methylotrophic microorganisms. Has a role in the detoxification of exogenous formate in non-methylotrophic organisms. The polypeptide is Formate dehydrogenase 2 (FDH2) (Saccharomyces cerevisiae (strain CEN.PK113-7D) (Baker's yeast)).